The primary structure comprises 227 residues: Cleavage and polyadenylation specificity factor subunit 5 (227 aa).

N-acetylserine is present on S2. Residues 2 to 147 (SVVPPNRSQT…DWVIDDCIGN (146 aa)) form a necessary for RNA-binding region. R15 bears the Omega-N-methylarginine mark. 2 positions are modified to N6-acetyllysine: K23 and K29. Y40 is modified (phosphotyrosine). Residue K56 is modified to N6-acetyllysine. The Nudix hydrolase domain maps to 76–201 (MRRTVEGVLI…KLVAAPLFEL (126 aa)). Residues 81–160 (EGVLIVHEHR…PNFEPPQYPY (80 aa)) are necessary for interactions with PAPOLA and PABPN1. The tract at residues 102-104 (TFF) is interaction with RNA. The Nudix box signature appears at 109–130 (GELNPGEDEVEGLKRLMTEILG).

This sequence belongs to the Nudix hydrolase family. CPSF5 subfamily. In terms of assembly, homodimer (via N- and C-terminus); binds RNA as homodimer. Component of the cleavage factor Im (CFIm) complex which is a heterotetramer composed of two subunits of NUDT21/CPSF5 and two subunits of CPSF6 or CPSF7 or a heterodimer of CPSF6 and CPSF7. The cleavage factor Im (CFIm) complex associates with the CPSF and CSTF complexes to promote the assembly of the core mRNA 3'-processing machinery. Interacts with CPSF6 (via the RRM domain); this interaction is direct and enhances binding to RNA. Interacts with CPSF7. Interacts with FIP1L1; this interaction occurs in a RNA sequence-specific manner. Interacts with PABPN1. Interacts (via N-terminus) with PAPOLA (via C-terminus); this interaction is direct and diminished by acetylation. Interacts with SNRNP70. Interacts with VIRMA. In terms of processing, acetylated mainly by p300/CBP, recruited to the complex by CPSF6. Acetylation decreases interaction with PAPAO. Deacetylated by the class I/II HDACs, HDAC1, HDAC3 and HDAC10, and by the class III HDACs, SIRT1 and SIRT2.

Its subcellular location is the nucleus. The protein localises to the cytoplasm. Its function is as follows. Component of the cleavage factor Im (CFIm) complex that functions as an activator of the pre-mRNA 3'-end cleavage and polyadenylation processing required for the maturation of pre-mRNA into functional mRNAs. CFIm contributes to the recruitment of multiprotein complexes on specific sequences on the pre-mRNA 3'-end, so called cleavage and polyadenylation signals (pA signals). Most pre-mRNAs contain multiple pA signals, resulting in alternative cleavage and polyadenylation (APA) producing mRNAs with variable 3'-end formation. The CFIm complex acts as a key regulator of cleavage and polyadenylation site choice during APA through its binding to 5'-UGUA-3' elements localized in the 3'-untranslated region (UTR) for a huge number of pre-mRNAs. NUDT21/CPSF5 activates indirectly the mRNA 3'-processing machinery by recruiting CPSF6 and/or CPSF7. Binds to 5'-UGUA-3' elements localized upstream of pA signals that act as enhancers of pre-mRNA 3'-end processing. The homodimer mediates simultaneous sequence-specific recognition of two 5'-UGUA-3' elements within the pre-mRNA. Plays a role in somatic cell fate transitions and pluripotency by regulating widespread changes in gene expression through an APA-dependent function. Binds to chromatin. Binds to, but does not hydrolyze mono- and di-adenosine nucleotides. The polypeptide is Cleavage and polyadenylation specificity factor subunit 5 (NUDT21) (Bos taurus (Bovine)).